Reading from the N-terminus, the 174-residue chain is 2-C-methyl-D-erythritol 2,4-cyclodiphosphate synthase (174 aa).

Aspartate 13, histidine 15, and histidine 61 together coordinate a divalent metal cation. 13–15 (DAH) is a binding site for 4-CDP-2-C-methyl-D-erythritol 2-phosphate. 4-CDP-2-C-methyl-D-erythritol 2-phosphate is bound by residues 75–77 (DIG), 149–152 (TTTD), phenylalanine 156, and arginine 159.

This sequence belongs to the IspF family. As to quaternary structure, homotrimer. The cofactor is a divalent metal cation.

The enzyme catalyses 4-CDP-2-C-methyl-D-erythritol 2-phosphate = 2-C-methyl-D-erythritol 2,4-cyclic diphosphate + CMP. Its pathway is isoprenoid biosynthesis; isopentenyl diphosphate biosynthesis via DXP pathway; isopentenyl diphosphate from 1-deoxy-D-xylulose 5-phosphate: step 4/6. Functionally, involved in the biosynthesis of isopentenyl diphosphate (IPP) and dimethylallyl diphosphate (DMAPP), two major building blocks of isoprenoid compounds. Catalyzes the conversion of 4-diphosphocytidyl-2-C-methyl-D-erythritol 2-phosphate (CDP-ME2P) to 2-C-methyl-D-erythritol 2,4-cyclodiphosphate (ME-CPP) with a corresponding release of cytidine 5-monophosphate (CMP). The chain is 2-C-methyl-D-erythritol 2,4-cyclodiphosphate synthase from Bifidobacterium longum subsp. infantis (strain ATCC 15697 / DSM 20088 / JCM 1222 / NCTC 11817 / S12).